The following is a 220-amino-acid chain: Tumor protein D54 (220 aa).

N-acetylmethionine is present on M1. Residues 1–14 (MDSASQDINLNSPN) are compositionally biased toward polar residues. Residues 1 to 26 (MDSASQDINLNSPNKGVLSDFMTDVP) form a disordered region. S3, S12, and S19 each carry phosphoserine. Residues 40 to 82 (GLTEVEEEELRAELAKVEEEIVTLRQVLAAKERHCGELKRRLG) adopt a coiled-coil conformation. A phosphoserine mark is found at S96, S149, S168, and S175. At T177 the chain carries Phosphothreonine. At S180 the chain carries Phosphoserine. Residue T187 is modified to Phosphothreonine. The tract at residues 189–220 (KSKVVGGRENGSDTLPSSPGSGDQTLPDHAPF) is disordered. Residues 200–212 (SDTLPSSPGSGDQ) are compositionally biased toward polar residues. S206 and S209 each carry phosphoserine.

The protein belongs to the TPD52 family. As to quaternary structure, forms a homodimer or heterodimer with other members of the family. Interacts with MAL2.

The protein is Tumor protein D54 (Tpd52l2) of Rattus norvegicus (Rat).